A 426-amino-acid polypeptide reads, in one-letter code: Antigen EM13 (426 aa).

Positions 1–240 (MIQERADIEK…TVAKVDADAD (240 aa)) constitute an F-BAR domain. Disordered regions lie at residues 287–315 (LTSL…ISTS) and 350–369 (ISKE…FVDD). Residues 305-315 (TTDSGSNISTS) are compositionally biased toward polar residues. The region spanning 371-426 (RPGVPIRALYDYVGVEADELSFNSGDLFEKLEDEDEQGWCKGRKDGRVGLYPRQLR) is the SH3 domain.

The sequence is that of Antigen EM13 (EM13) from Echinococcus multilocularis (Fox tapeworm).